Here is a 274-residue protein sequence, read N- to C-terminus: Putative pyruvate, phosphate dikinase regulatory protein 1 (274 aa).

149–156 is a binding site for ADP; that stretch reads GISRTSKT.

It belongs to the pyruvate, phosphate/water dikinase regulatory protein family. PDRP subfamily.

It carries out the reaction N(tele)-phospho-L-histidyl/L-threonyl-[pyruvate, phosphate dikinase] + ADP = N(tele)-phospho-L-histidyl/O-phospho-L-threonyl-[pyruvate, phosphate dikinase] + AMP + H(+). The catalysed reaction is N(tele)-phospho-L-histidyl/O-phospho-L-threonyl-[pyruvate, phosphate dikinase] + phosphate + H(+) = N(tele)-phospho-L-histidyl/L-threonyl-[pyruvate, phosphate dikinase] + diphosphate. In terms of biological role, bifunctional serine/threonine kinase and phosphorylase involved in the regulation of the pyruvate, phosphate dikinase (PPDK) by catalyzing its phosphorylation/dephosphorylation. This is Putative pyruvate, phosphate dikinase regulatory protein 1 from Listeria monocytogenes serotype 4b (strain F2365).